The chain runs to 205 residues: MSTKKRRVLKIIILGDSGVGKTSLMNQYVQKKFTKEYKATIGADFLTKEIEVDDKKVTMQIWDTAGQERFQSLGSAFYRGADCCMLVFDVNNAKSFDDLDNWRDEFIIQAGPSDPDNFPFVVLGNKIDEVGVNRQVTEKKAKAWCASKGSIPYFETSAKEDINVEAAFTCITRNALRNEKEEELFVPDAVDMNTSATQRKRGGCC.

15 to 22 (GDSGVGKT) contributes to the GTP binding site. The Effector region motif lies at 37–45 (YKATIGADF). GTP contacts are provided by residues 63 to 67 (DTAGQ) and 125 to 128 (NKID). S-geranylgeranyl cysteine attachment occurs at residues C204 and C205.

It belongs to the small GTPase superfamily. Rab family.

It is found in the cell membrane. Functionally, protein transport. Probably involved in vesicular traffic. The sequence is that of GTP-binding protein yptV5 (YPTV5) from Volvox carteri (Green alga).